Consider the following 275-residue polypeptide: Large ribosomal subunit protein uL2 (275 aa).

The segment at 208-275 (AGAKRWRGRR…NMIIRDRRKK (68 aa)) is disordered. Basic residues-rich tracts occupy residues 209–219 (GAKRWRGRRPT) and 254–263 (KGYKTRRNKR).

It belongs to the universal ribosomal protein uL2 family. In terms of assembly, part of the 50S ribosomal subunit. Forms a bridge to the 30S subunit in the 70S ribosome.

In terms of biological role, one of the primary rRNA binding proteins. Required for association of the 30S and 50S subunits to form the 70S ribosome, for tRNA binding and peptide bond formation. It has been suggested to have peptidyltransferase activity; this is somewhat controversial. Makes several contacts with the 16S rRNA in the 70S ribosome. This chain is Large ribosomal subunit protein uL2, found in Coxiella burnetii (strain CbuG_Q212) (Coxiella burnetii (strain Q212)).